Consider the following 233-residue polypeptide: MNHLNKLMERLGHQFNNLELLKIALTHRSSGADNNERLEFLGDSVLGFIIASELYQRRPQAREGDLSRMRASMVNGDELAQMSTKLGINEYLQLGVGEQKSGGKRRRSILADALEAIVGSIYIDAGLETCRRCVLNWYGERVDDLSKLSPKKDAKSLLQEWLQARRLPLPTYEVKITGEAHAQTFTVNCYVKGLPHKTEGVNTTRRRAEQIAAKRFLELLDDGKGDGITERDQ.

An RNase III domain is found at 4-126 (LNKLMERLGH…IVGSIYIDAG (123 aa)). Mg(2+) is bound at residue Glu39. Asp43 is an active-site residue. Residues Asp112 and Glu115 each coordinate Mg(2+). Glu115 is an active-site residue. The region spanning 153-222 (DAKSLLQEWL…AKRFLELLDD (70 aa)) is the DRBM domain.

Belongs to the ribonuclease III family. As to quaternary structure, homodimer. Mg(2+) is required as a cofactor.

The protein localises to the cytoplasm. It carries out the reaction Endonucleolytic cleavage to 5'-phosphomonoester.. Functionally, digests double-stranded RNA. Involved in the processing of primary rRNA transcript to yield the immediate precursors to the large and small rRNAs (23S and 16S). Processes some mRNAs, and tRNAs when they are encoded in the rRNA operon. Processes pre-crRNA and tracrRNA of type II CRISPR loci if present in the organism. The protein is Ribonuclease 3 of Coxiella burnetii (strain CbuG_Q212) (Coxiella burnetii (strain Q212)).